A 603-amino-acid chain; its full sequence is UvrABC system protein C (603 aa).

Residues 15 to 92 (DQPGCYLMKD…IKKHDPRFNI (78 aa)) form the GIY-YIG domain. The UVR domain occupies 197 to 232 (KTVKNDLMKKMQEAAENMEFEKAGEFRDQINAIETT).

It belongs to the UvrC family. Interacts with UvrB in an incision complex.

It localises to the cytoplasm. Its function is as follows. The UvrABC repair system catalyzes the recognition and processing of DNA lesions. UvrC both incises the 5' and 3' sides of the lesion. The N-terminal half is responsible for the 3' incision and the C-terminal half is responsible for the 5' incision. The sequence is that of UvrABC system protein C from Listeria innocua serovar 6a (strain ATCC BAA-680 / CLIP 11262).